Reading from the N-terminus, the 419-residue chain is Imidazolonepropionase (419 aa).

Residues H82 and H84 each coordinate Fe(3+). Zn(2+)-binding residues include H82 and H84. 4-imidazolone-5-propanoate is bound by residues R91, Y154, and H187. Y154 serves as a coordination point for N-formimidoyl-L-glutamate. A Fe(3+)-binding site is contributed by H252. H252 contacts Zn(2+). E255 is a binding site for 4-imidazolone-5-propanoate. Position 326 (D326) interacts with Fe(3+). D326 lines the Zn(2+) pocket. N328 and G330 together coordinate N-formimidoyl-L-glutamate. S331 contacts 4-imidazolone-5-propanoate.

The protein belongs to the metallo-dependent hydrolases superfamily. HutI family. The cofactor is Zn(2+). Fe(3+) serves as cofactor.

It localises to the cytoplasm. The catalysed reaction is 4-imidazolone-5-propanoate + H2O = N-formimidoyl-L-glutamate. It participates in amino-acid degradation; L-histidine degradation into L-glutamate; N-formimidoyl-L-glutamate from L-histidine: step 3/3. In terms of biological role, catalyzes the hydrolytic cleavage of the carbon-nitrogen bond in imidazolone-5-propanoate to yield N-formimidoyl-L-glutamate. It is the third step in the universal histidine degradation pathway. The sequence is that of Imidazolonepropionase from Clostridium tetani (strain Massachusetts / E88).